Reading from the N-terminus, the 148-residue chain is Ribonuclease H (148 aa).

Positions 1 to 141 constitute an RNase H type-1 domain; sequence MKTVEIYTDG…ADELANLGVK (141 aa). Residues D9, E47, D69, and D133 each contribute to the Mg(2+) site.

It belongs to the RNase H family. In terms of assembly, monomer. Mg(2+) serves as cofactor.

The protein resides in the cytoplasm. It catalyses the reaction Endonucleolytic cleavage to 5'-phosphomonoester.. In terms of biological role, endonuclease that specifically degrades the RNA of RNA-DNA hybrids. This chain is Ribonuclease H, found in Hahella chejuensis (strain KCTC 2396).